Reading from the N-terminus, the 483-residue chain is tRNA sulfurtransferase (483 aa).

Residues 61–165 form the THUMP domain; sequence EAVCDALTRI…DDKLILVNAR (105 aa). ATP is bound by residues 183 to 184, lysine 265, glycine 287, and glutamine 296; that span reads LI. Cysteine 344 and cysteine 456 are disulfide-bonded. The 80-residue stretch at 404-483 folds into the Rhodanese domain; sequence FATNDVVLDI…FNNVKVYRKK (80 aa). Residue cysteine 456 is the Cysteine persulfide intermediate of the active site.

Belongs to the ThiI family.

It is found in the cytoplasm. The catalysed reaction is [ThiI sulfur-carrier protein]-S-sulfanyl-L-cysteine + a uridine in tRNA + 2 reduced [2Fe-2S]-[ferredoxin] + ATP + H(+) = [ThiI sulfur-carrier protein]-L-cysteine + a 4-thiouridine in tRNA + 2 oxidized [2Fe-2S]-[ferredoxin] + AMP + diphosphate. The enzyme catalyses [ThiS sulfur-carrier protein]-C-terminal Gly-Gly-AMP + S-sulfanyl-L-cysteinyl-[cysteine desulfurase] + AH2 = [ThiS sulfur-carrier protein]-C-terminal-Gly-aminoethanethioate + L-cysteinyl-[cysteine desulfurase] + A + AMP + 2 H(+). Its pathway is cofactor biosynthesis; thiamine diphosphate biosynthesis. Functionally, catalyzes the ATP-dependent transfer of a sulfur to tRNA to produce 4-thiouridine in position 8 of tRNAs, which functions as a near-UV photosensor. Also catalyzes the transfer of sulfur to the sulfur carrier protein ThiS, forming ThiS-thiocarboxylate. This is a step in the synthesis of thiazole, in the thiamine biosynthesis pathway. The sulfur is donated as persulfide by IscS. The chain is tRNA sulfurtransferase from Proteus mirabilis (strain HI4320).